The following is a 110-amino-acid chain: Nucleoid-associated protein KPK_4227 (110 aa).

Residues 1–22 (MFGGKGGLGNLMKQAQQMQDKM) are disordered.

This sequence belongs to the YbaB/EbfC family. In terms of assembly, homodimer.

It localises to the cytoplasm. It is found in the nucleoid. Its function is as follows. Binds to DNA and alters its conformation. May be involved in regulation of gene expression, nucleoid organization and DNA protection. The chain is Nucleoid-associated protein KPK_4227 from Klebsiella pneumoniae (strain 342).